Reading from the N-terminus, the 71-residue chain is Venom peptide 2-long (71 aa).

The N-terminal stretch at 1 to 24 (MKQSIIIALFATIAVMACLQMVAA) is a signal peptide. AXPX repeat units lie at residues 24–27 (AVPA), 32–35 (AAPG), 44–47 (ASPE), 50–53 (ASPE), and 54–57 (AEPI). Positions 25 to 54 (VPAPVPEAAPGPVAEAEAYASPEALASPEA) are excised as a propeptide. Leucine amide is present on Leu68.

It belongs to the MCD family. Protonectin subfamily. As to expression, expressed by the venom gland.

Its subcellular location is the secreted. It is found in the target cell membrane. In terms of biological role, antimicrobial peptide with strong activity against the fungus B.cinerea (MIC=0.5 ug/ml), and poor activities against the fungus C.albicans (MIC=100 ug/ml), the Gram-positive bacterium S.aureus (MIC=125 ug/ml) and the Gram-negative bacterium E.coli (MIC=125 ug/ml). Functionally, antimicrobial peptide with strong activity against the fungus B.cinerea (MIC=0.4 uM), and poor activities against the fungus C.albicans (MIC=16 uM), the Gram-positive bacterium S.aureus (MIC=20 uM) and the Gram-negative bacterium E.coli (MIC=79 uM). Shows cytolytic activity against insect cell lines. Has potent hemolytic activity against ovine erythrocytes. Has potent hemolytic activity against human erythrocytes (EC(50)=31 uM). In vivo, peptide injection in the vicinity of the head and thorax of lepidopteran larvae induces feeding disorder followed by death due to starvation. The sequence is that of Venom peptide 2-long from Orancistrocerus drewseni (Solitary wasp).